An 88-amino-acid chain; its full sequence is UPF0223 protein RBAM_014500 (88 aa).

Belongs to the UPF0223 family.

The chain is UPF0223 protein RBAM_014500 from Bacillus velezensis (strain DSM 23117 / BGSC 10A6 / LMG 26770 / FZB42) (Bacillus amyloliquefaciens subsp. plantarum).